A 445-amino-acid polypeptide reads, in one-letter code: Enolase 1 (445 aa).

Positions 164 and 173 each coordinate substrate. The active-site Proton donor is the Glu-216. 3 residues coordinate Mg(2+): Asp-251, Glu-301, and Asp-328. Substrate contacts are provided by Glu-301 and Asp-328. Lys-353 functions as the Proton acceptor in the catalytic mechanism. Substrate contacts are provided by residues 380 to 383 and Lys-404; that span reads SHRS.

The protein belongs to the enolase family. Homodimer. Requires Mg(2+) as cofactor.

It is found in the cytoplasm. The catalysed reaction is (2R)-2-phosphoglycerate = phosphoenolpyruvate + H2O. The protein operates within carbohydrate degradation; glycolysis; pyruvate from D-glyceraldehyde 3-phosphate: step 4/5. The protein is Enolase 1 (ENO1) of Hevea brasiliensis (Para rubber tree).